Here is a 683-residue protein sequence, read N- to C-terminus: Phosphomethylpyrimidine synthase (683 aa).

Substrate-binding positions include asparagine 235, methionine 264, tyrosine 293, histidine 329, 349-351 (SRG), 390-393 (DGMR), and glutamate 429. Histidine 433 serves as a coordination point for Zn(2+). Tyrosine 456 provides a ligand contact to substrate. A Zn(2+)-binding site is contributed by histidine 497. [4Fe-4S] cluster-binding residues include cysteine 577, cysteine 580, and cysteine 585. Positions 647–683 (RQSPGVESTSLESTSLESTVLESTSLESTALEKAKEV) are disordered. Positions 653 to 675 (ESTSLESTSLESTVLESTSLEST) are enriched in low complexity.

It belongs to the ThiC family. In terms of assembly, homodimer. [4Fe-4S] cluster serves as cofactor.

The enzyme catalyses 5-amino-1-(5-phospho-beta-D-ribosyl)imidazole + S-adenosyl-L-methionine = 4-amino-2-methyl-5-(phosphooxymethyl)pyrimidine + CO + 5'-deoxyadenosine + formate + L-methionine + 3 H(+). It participates in cofactor biosynthesis; thiamine diphosphate biosynthesis. Its function is as follows. Catalyzes the synthesis of the hydroxymethylpyrimidine phosphate (HMP-P) moiety of thiamine from aminoimidazole ribotide (AIR) in a radical S-adenosyl-L-methionine (SAM)-dependent reaction. The sequence is that of Phosphomethylpyrimidine synthase from Shewanella loihica (strain ATCC BAA-1088 / PV-4).